A 79-amino-acid polypeptide reads, in one-letter code: MGGWSSPSHWLIILLIVVLLFGAKKIPELAKGLGKGIKTFKDEMNNDDEVAKNTQKIEENKNTTNNTSADASIDKTKKA.

A helical membrane pass occupies residues 1 to 21 (MGGWSSPSHWLIILLIVVLLF). Residues 52-61 (KNTQKIEENK) show a composition bias toward basic and acidic residues. The interval 52-79 (KNTQKIEENKNTTNNTSADASIDKTKKA) is disordered.

Belongs to the TatA/E family. The Tat system comprises two distinct complexes: a TatABC complex, containing multiple copies of TatA, TatB and TatC subunits, and a separate TatA complex, containing only TatA subunits. Substrates initially bind to the TatABC complex, which probably triggers association of the separate TatA complex to form the active translocon.

It is found in the cell inner membrane. Functionally, part of the twin-arginine translocation (Tat) system that transports large folded proteins containing a characteristic twin-arginine motif in their signal peptide across membranes. TatA could form the protein-conducting channel of the Tat system. The protein is Sec-independent protein translocase protein TatA of Campylobacter jejuni subsp. jejuni serotype O:6 (strain 81116 / NCTC 11828).